Here is a 126-residue protein sequence, read N- to C-terminus: Large ribosomal subunit protein bL12 (126 aa).

The protein belongs to the bacterial ribosomal protein bL12 family. In terms of assembly, homodimer. Part of the ribosomal stalk of the 50S ribosomal subunit. Forms a multimeric L10(L12)X complex, where L10 forms an elongated spine to which 2 to 4 L12 dimers bind in a sequential fashion. Binds GTP-bound translation factors.

Its function is as follows. Forms part of the ribosomal stalk which helps the ribosome interact with GTP-bound translation factors. Is thus essential for accurate translation. The sequence is that of Large ribosomal subunit protein bL12 from Helicobacter hepaticus (strain ATCC 51449 / 3B1).